The primary structure comprises 429 residues: UPF0761 membrane protein ABO_1543 (429 aa).

The next 6 membrane-spanning stretches (helical) occupy residues 45-65 (LFAI…VPAL), 102-122 (LTVL…STVE), 141-161 (LLMY…GLAI), 184-204 (WLAV…YTVV), 216-236 (LGAA…TFFI), and 256-278 (LLWI…ALVV).

The protein belongs to the UPF0761 family.

The protein localises to the cell inner membrane. This Alcanivorax borkumensis (strain ATCC 700651 / DSM 11573 / NCIMB 13689 / SK2) protein is UPF0761 membrane protein ABO_1543.